The primary structure comprises 249 residues: Enolase-phosphatase E1 (249 aa).

The protein belongs to the HAD-like hydrolase superfamily. MasA/MtnC family. As to quaternary structure, monomer. Mg(2+) serves as cofactor.

It carries out the reaction 5-methylsulfanyl-2,3-dioxopentyl phosphate + H2O = 1,2-dihydroxy-5-(methylsulfanyl)pent-1-en-3-one + phosphate. Its pathway is amino-acid biosynthesis; L-methionine biosynthesis via salvage pathway; L-methionine from S-methyl-5-thio-alpha-D-ribose 1-phosphate: step 3/6. It participates in amino-acid biosynthesis; L-methionine biosynthesis via salvage pathway; L-methionine from S-methyl-5-thio-alpha-D-ribose 1-phosphate: step 4/6. Its function is as follows. Bifunctional enzyme that catalyzes the enolization of 2,3-diketo-5-methylthiopentyl-1-phosphate (DK-MTP-1-P) into the intermediate 2-hydroxy-3-keto-5-methylthiopentenyl-1-phosphate (HK-MTPenyl-1-P), which is then dephosphorylated to form the acireductone 1,2-dihydroxy-3-keto-5-methylthiopentene (DHK-MTPene). This chain is Enolase-phosphatase E1, found in Synechococcus sp. (strain CC9605).